Consider the following 4334-residue polypeptide: Cytoplasmic dynein 2 heavy chain 1 (4334 aa).

Residues 1–1704 form a stem region; it reads MSSDSRKTFV…KVAMAEATFD (1704 aa). An ATP-binding site is contributed by 150 to 157; it reads LGTAVRKG. Residues 1026–1097 adopt a coiled-coil conformation; sequence QEAKGLTAKL…AHLEEQKGNL (72 aa). 4 AAA regions span residues 1705 to 1929, 1996 to 2211, 2299 to 2544, and 2641 to 2882; these read YTWE…VLGI, KALA…KAFQ, GMDE…WING, and GYER…SSGS. ATP-binding positions include 1743-1750, 2034-2041, 2334-2341, and 2679-2686; these read GPAGTGKT, GPSGSGKS, GPEGCGKG, and GNSGVGRR. Residues 2897–3185 form a stalk region; it reads QIYNRKRTQV…ISVDKAESVL (289 aa). Coiled coils occupy residues 2930–2998 and 3120–3199; these read LSAE…SEVQ and ERVS…RGEK. AAA stretches follow at residues 3260–3492 and 3701–3917; these read LSSE…TVEK and MSSF…VITL.

It belongs to the dynein heavy chain family. The cytoplasmic dynein complex 2 is probably composed by a DHC1B homodimer and a number of D1BLIC light intermediate chains. Interacts with FAP133, FLA10 and LC8.

The protein localises to the cytoplasm. It localises to the cytoskeleton. It is found in the flagellum basal body. The protein resides in the cell projection. Its subcellular location is the cilium. The protein localises to the flagellum membrane. Functionally, may function as a motor for intraflagellar retrograde transport. Functions in flagellar biogenesis. The protein is Cytoplasmic dynein 2 heavy chain 1 (DHC1B) of Chlamydomonas reinhardtii (Chlamydomonas smithii).